An 869-amino-acid polypeptide reads, in one-letter code: Probable inorganic carbon transporter subunit DabA (869 aa).

The disordered stretch occupies residues 1-32 (MSTATLEQRAKRGEAPRANDAGHCAHPADGAR). Residues 8-17 (QRAKRGEAPR) are compositionally biased toward basic and acidic residues. 4 residues coordinate Zn(2+): cysteine 376, aspartate 378, histidine 555, and cysteine 570.

The protein belongs to the inorganic carbon transporter (TC 9.A.2) DabA family. In terms of assembly, forms a complex with DabB. It depends on Zn(2+) as a cofactor.

Its subcellular location is the cell inner membrane. Functionally, part of an energy-coupled inorganic carbon pump. The chain is Probable inorganic carbon transporter subunit DabA from Burkholderia multivorans (strain ATCC 17616 / 249).